The following is a 233-amino-acid chain: 2-C-methyl-D-erythritol 4-phosphate cytidylyltransferase (233 aa).

This sequence belongs to the IspD/TarI cytidylyltransferase family. IspD subfamily.

It carries out the reaction 2-C-methyl-D-erythritol 4-phosphate + CTP + H(+) = 4-CDP-2-C-methyl-D-erythritol + diphosphate. It functions in the pathway isoprenoid biosynthesis; isopentenyl diphosphate biosynthesis via DXP pathway; isopentenyl diphosphate from 1-deoxy-D-xylulose 5-phosphate: step 2/6. Its function is as follows. Catalyzes the formation of 4-diphosphocytidyl-2-C-methyl-D-erythritol from CTP and 2-C-methyl-D-erythritol 4-phosphate (MEP). This is 2-C-methyl-D-erythritol 4-phosphate cytidylyltransferase from Gloeobacter violaceus (strain ATCC 29082 / PCC 7421).